The sequence spans 379 residues: Sulfate adenylyltransferase (379 aa).

It belongs to the sulfate adenylyltransferase family.

It catalyses the reaction sulfate + ATP + H(+) = adenosine 5'-phosphosulfate + diphosphate. Its pathway is sulfur metabolism; hydrogen sulfide biosynthesis; sulfite from sulfate: step 1/3. In Pyrococcus abyssi (strain GE5 / Orsay), this protein is Sulfate adenylyltransferase (sat).